The primary structure comprises 701 residues: Ubiquitin thioesterase zranb1-A (701 aa).

3 consecutive RanBP2-type zinc fingers follow at residues 3–33, 79–108, and 143–173; these read EHGIKWGCEYCTYENWPSAIKCTMCRAPRPS, PSSKWSCQICTYLNWPRAIRCTQCLSQRRT, and IKGQHWTCSACTYENCAKAKKCVVCDHPTPN. Residues cysteine 10, cysteine 13, cysteine 24, cysteine 27, cysteine 85, cysteine 88, cysteine 99, and cysteine 102 each contribute to the Zn(2+) site. Residues 108 to 121 are compositionally biased toward polar residues; that stretch reads TRSPTESPQSSGSG. The disordered stretch occupies residues 108–129; it reads TRSPTESPQSSGSGLRSIPSPI. The Zn(2+) site is built by cysteine 150, cysteine 153, cysteine 164, and cysteine 167. Residues 198–219 are disordered; it reads WRGGCSSSNSQRRSPPTSKRDS. Residues 202 to 214 show a composition bias toward polar residues; sequence CSSSNSQRRSPPT. ANK repeat units lie at residues 253-283 and 306-333; these read RKTDWLFLNACVGIVEGDLSAVESYKTSGGD and YTLVHLSIRFQRQDMLAILLTEVSQHAA. In terms of domain architecture, OTU spans 425–585; the sequence is LYALWNRTAG…RGHFSALVAM (161 aa). Cysteine 436 (nucleophile) is an active-site residue. Histidine 578 functions as the Proton acceptor in the catalytic mechanism.

It belongs to the peptidase C64 family.

Its subcellular location is the cytoplasm. It localises to the nucleus. The catalysed reaction is Thiol-dependent hydrolysis of ester, thioester, amide, peptide and isopeptide bonds formed by the C-terminal Gly of ubiquitin (a 76-residue protein attached to proteins as an intracellular targeting signal).. Its function is as follows. Ubiquitin thioesterase, which specifically hydrolyzes 'Lys-29'-linked and 'Lys-33'-linked diubiquitin. Also cleaves 'Lys-63'-linked chains, but with 40-fold less efficiency compared to 'Lys-29'-linked ones. Positive regulator of the Wnt signaling pathway that deubiquitinates apc protein, a negative regulator of Wnt-mediated transcription. Acts as a regulator of autophagy by mediating deubiquitination of pik3c3/vps34, thereby promoting autophagosome maturation. Plays a role in the regulation of cell morphology and cytoskeletal organization. Required in the stress fiber dynamics and cell migration. In Xenopus laevis (African clawed frog), this protein is Ubiquitin thioesterase zranb1-A (zranb1-a).